Consider the following 376-residue polypeptide: Arginine/serine-rich coiled-coil protein 2 (376 aa).

The tract at residues Met1 to Asn171 is disordered. The span at Arg13–Arg52 shows a compositional bias: basic and acidic residues. Position 45 is a phosphoserine (Ser45). Basic residues predominate over residues His53–Ser155. A coiled-coil region spans residues Asn171–Thr214. Residue Lys317 forms a Glycyl lysine isopeptide (Lys-Gly) (interchain with G-Cter in SUMO1); alternate linkage. A Glycyl lysine isopeptide (Lys-Gly) (interchain with G-Cter in SUMO2); alternate cross-link involves residue Lys317. Ser318 carries the post-translational modification Phosphoserine.

The protein belongs to the RSRC2 family.

This Mus musculus (Mouse) protein is Arginine/serine-rich coiled-coil protein 2 (Rsrc2).